The primary structure comprises 144 residues: Bombinins BLP-7/GH-2 (144 aa).

A signal peptide spans 1–18; the sequence is MNFKYIVAVSFLIASTYA. Positions 19-43 are excised as a propeptide; that stretch reads RSVKNDEQSLSQRDVLEEESLREIR. At Asn-70 the chain carries Asparagine amide. A propeptide spanning residues 74-123 is cleaved from the precursor; that stretch reads TAEEHEVMKRLEAVMRDLDSLDYPEEASEMETRSFNQEEIANLFTKKEKR. Position 143 is an isoleucine amide (Ile-143).

This sequence belongs to the bombinin family. Expressed by the skin glands.

The protein resides in the secreted. Antimicrobial peptide with activity against Gram-positive and -negative bacteria and fungi. Shows activity against P.acnes (MIC=5 uM), E.coli (MIC=5-6.3 uM), S.aureus (MIC=5-6.3 uM), M.luteus, S.cerevisiae and C.albicans (MIC=10-12.5 uM). Also reduces the production of interleukin (IL)-8 and granulocyte-macrophage colony stimulating factor (CSF2) in normal human epidermal keratinocytes (NHEKs). Shows anticancer activity against three human hepatoma cell lines. In vivo, using the rat ear edema model, suppress P.acnes-induced skin inflammation, significantly reducing the ear thickness. Shows weak hemolytic activity against human erythrocytes. Functionally, shows weak antimicrobial activity but high hemolytic activity. This Bombina orientalis (Oriental fire-bellied toad) protein is Bombinins BLP-7/GH-2.